The primary structure comprises 417 residues: NADH-quinone oxidoreductase subunit D (417 aa).

It belongs to the complex I 49 kDa subunit family. As to quaternary structure, NDH-1 is composed of 14 different subunits. Subunits NuoB, C, D, E, F, and G constitute the peripheral sector of the complex.

Its subcellular location is the cell inner membrane. The catalysed reaction is a quinone + NADH + 5 H(+)(in) = a quinol + NAD(+) + 4 H(+)(out). NDH-1 shuttles electrons from NADH, via FMN and iron-sulfur (Fe-S) centers, to quinones in the respiratory chain. The immediate electron acceptor for the enzyme in this species is believed to be ubiquinone. Couples the redox reaction to proton translocation (for every two electrons transferred, four hydrogen ions are translocated across the cytoplasmic membrane), and thus conserves the redox energy in a proton gradient. The protein is NADH-quinone oxidoreductase subunit D of Burkholderia cenocepacia (strain HI2424).